A 242-amino-acid chain; its full sequence is Coiled-coil domain-containing protein 107 (242 aa).

A signal peptide spans M1 to G24. The segment at P27 to R62 is disordered. A compositionally biased stretch (basic and acidic residues) spans E47–R62. A helical transmembrane segment spans residues S65–L85. The stretch at E97–D132 forms a coiled coil. A disordered region spans residues K186–L210.

The protein localises to the membrane. In Mus musculus (Mouse), this protein is Coiled-coil domain-containing protein 107 (Ccdc107).